The sequence spans 189 residues: 6,7-dimethyl-8-ribityllumazine synthase (189 aa).

5-amino-6-(D-ribitylamino)uracil-binding positions include Trp-31, 65–67 (SFE), and 89–91 (CVI). 94–95 (ET) is a (2S)-2-hydroxy-3-oxobutyl phosphate binding site. The active-site Proton donor is the His-97. Phe-122 provides a ligand contact to 5-amino-6-(D-ribitylamino)uracil. Residue Arg-136 participates in (2S)-2-hydroxy-3-oxobutyl phosphate binding.

The protein belongs to the DMRL synthase family.

It catalyses the reaction (2S)-2-hydroxy-3-oxobutyl phosphate + 5-amino-6-(D-ribitylamino)uracil = 6,7-dimethyl-8-(1-D-ribityl)lumazine + phosphate + 2 H2O + H(+). It functions in the pathway cofactor biosynthesis; riboflavin biosynthesis; riboflavin from 2-hydroxy-3-oxobutyl phosphate and 5-amino-6-(D-ribitylamino)uracil: step 1/2. Catalyzes the formation of 6,7-dimethyl-8-ribityllumazine by condensation of 5-amino-6-(D-ribitylamino)uracil with 3,4-dihydroxy-2-butanone 4-phosphate. This is the penultimate step in the biosynthesis of riboflavin. In Flavobacterium psychrophilum (strain ATCC 49511 / DSM 21280 / CIP 103535 / JIP02/86), this protein is 6,7-dimethyl-8-ribityllumazine synthase.